The primary structure comprises 208 residues: Interleukin-6 (208 aa).

Positions 1-29 (MNSRFTSAFTPFAVSLGLLLVMTSAFPTP) are cleaved as a signal peptide. N38 carries an N-linked (GlcNAc...) asparagine glycan. C72 and C78 are disulfide-bonded. S81 carries the post-translational modification Phosphoserine. Residues C101 and C111 are joined by a disulfide bond.

The protein belongs to the IL-6 superfamily. In terms of assembly, component of a hexamer of two molecules each of IL6, IL6R and IL6ST; first binds to IL6R to associate with the signaling subunit IL6ST. Interacts with IL6R (via the N-terminal ectodomain); this interaction may be affected by IL6R-binding with SORL1, hence decreasing IL6 cis signaling. Interacts with SORL1 (via the N-terminal ectodomain); this interaction leads to IL6 internalization and lysosomal degradation. May form a trimeric complex with the soluble SORL1 ectodomain and soluble IL6R receptor; this interaction might stabilize circulating IL6, hence promoting IL6 trans signaling.

It localises to the secreted. Functionally, cytokine with a wide variety of biological functions in immunity, tissue regeneration, and metabolism. Binds to IL6R, then the complex associates to the signaling subunit IL6ST/gp130 to trigger the intracellular IL6-signaling pathway. The interaction with the membrane-bound IL6R and IL6ST stimulates 'classic signaling', whereas the binding of IL6 and soluble IL6R to IL6ST stimulates 'trans-signaling'. Alternatively, 'cluster signaling' occurs when membrane-bound IL6:IL6R complexes on transmitter cells activate IL6ST receptors on neighboring receiver cells. Its function is as follows. IL6 is a potent inducer of the acute phase response. Rapid production of IL6 contributes to host defense during infection and tissue injury, but excessive IL6 synthesis is involved in disease pathology. In the innate immune response, is synthesized by myeloid cells, such as macrophages and dendritic cells, upon recognition of pathogens through toll-like receptors (TLRs) at the site of infection or tissue injury. In the adaptive immune response, is required for the differentiation of B cells into immunoglobulin-secreting cells. Plays a major role in the differentiation of CD4(+) T cell subsets. Essential factor for the development of T follicular helper (Tfh) cells that are required for the induction of germinal-center formation. Required to drive naive CD4(+) T cells to the Th17 lineage. Also required for proliferation of myeloma cells and the survival of plasmablast cells. In terms of biological role, acts as an essential factor in bone homeostasis and on vessels directly or indirectly by induction of VEGF, resulting in increased angiogenesis activity and vascular permeability. Induces, through 'trans-signaling' and synergistically with IL1B and TNF, the production of VEGF. Involved in metabolic controls, is discharged into the bloodstream after muscle contraction increasing lipolysis and improving insulin resistance. 'Trans-signaling' in central nervous system also regulates energy and glucose homeostasis. Mediates, through GLP-1, crosstalk between insulin-sensitive tissues, intestinal L cells and pancreatic islets to adapt to changes in insulin demand. Also acts as a myokine. Plays a protective role during liver injury, being required for maintenance of tissue regeneration. Also has a pivotal role in iron metabolism by regulating HAMP/hepcidin expression upon inflammation or bacterial infection. Through activation of IL6ST-YAP-NOTCH pathway, induces inflammation-induced epithelial regeneration. This is Interleukin-6 (IL6) from Bos taurus (Bovine).